Reading from the N-terminus, the 275-residue chain is Dihydropteroate synthase (275 aa).

The Pterin-binding domain occupies 15–267; sequence PQIMGILNFT…DVAATSDMLK (253 aa). Mg(2+) is bound at residue asparagine 22. Residues threonine 62, aspartate 96, asparagine 115, aspartate 185, lysine 221, and 255–257 contribute to the (7,8-dihydropterin-6-yl)methyl diphosphate site; that span reads RVH.

It belongs to the DHPS family. Homodimer. Mg(2+) is required as a cofactor.

It carries out the reaction (7,8-dihydropterin-6-yl)methyl diphosphate + 4-aminobenzoate = 7,8-dihydropteroate + diphosphate. It participates in cofactor biosynthesis; tetrahydrofolate biosynthesis; 7,8-dihydrofolate from 2-amino-4-hydroxy-6-hydroxymethyl-7,8-dihydropteridine diphosphate and 4-aminobenzoate: step 1/2. Catalyzes the condensation of para-aminobenzoate (pABA) with 6-hydroxymethyl-7,8-dihydropterin diphosphate (DHPt-PP) to form 7,8-dihydropteroate (H2Pte), the immediate precursor of folate derivatives. The protein is Dihydropteroate synthase (folP-A) of Haemophilus influenzae (strain ATCC 51907 / DSM 11121 / KW20 / Rd).